Reading from the N-terminus, the 312-residue chain is DNA-directed RNA polymerase subunit alpha (312 aa).

An alpha N-terminal domain (alpha-NTD) region spans residues 1–226 (MIEFEKPRIE…EHLDIFVNLT (226 aa)). The tract at residues 243–312 (KEKMLEMTIE…DLGLGLRKDD (70 aa)) is alpha C-terminal domain (alpha-CTD).

This sequence belongs to the RNA polymerase alpha chain family. As to quaternary structure, homodimer. The RNAP catalytic core consists of 2 alpha, 1 beta, 1 beta' and 1 omega subunit. When a sigma factor is associated with the core the holoenzyme is formed, which can initiate transcription.

The enzyme catalyses RNA(n) + a ribonucleoside 5'-triphosphate = RNA(n+1) + diphosphate. DNA-dependent RNA polymerase catalyzes the transcription of DNA into RNA using the four ribonucleoside triphosphates as substrates. The chain is DNA-directed RNA polymerase subunit alpha from Enterococcus faecalis (strain ATCC 700802 / V583).